Reading from the N-terminus, the 207-residue chain is Outer-membrane lipoprotein carrier protein (207 aa).

A signal peptide spans 1-21 (MRAIRMLLVSALTLGSVTAYA).

The protein belongs to the LolA family. In terms of assembly, monomer.

It is found in the periplasm. Its function is as follows. Participates in the translocation of lipoproteins from the inner membrane to the outer membrane. Only forms a complex with a lipoprotein if the residue after the N-terminal Cys is not an aspartate (The Asp acts as a targeting signal to indicate that the lipoprotein should stay in the inner membrane). The protein is Outer-membrane lipoprotein carrier protein of Pseudomonas putida (strain ATCC 47054 / DSM 6125 / CFBP 8728 / NCIMB 11950 / KT2440).